A 353-amino-acid chain; its full sequence is Polyprenal reductase 2 (353 aa).

The next 6 membrane-spanning stretches (helical) occupy residues 11–31 (PLLC…ALPI), 78–98 (FMHF…AIWF), 175–195 (MHIV…LSLA), 234–254 (PLLK…WGSL), 291–308 (YLAE…SGAE), and 313–335 (WFLF…NWYL).

The protein belongs to the steroid 5-alpha reductase family. Polyprenal reductase subfamily.

It is found in the cell membrane. The catalysed reaction is a di-trans,poly-cis-dolichal + NADP(+) = a di-trans,poly-cis-polyprenal + NADPH + H(+). It functions in the pathway protein modification; protein glycosylation. Plays a key role in early steps of protein N-linked glycosylation by being involved in the conversion of polyprenol into dolichol. Acts as a polyprenal reductase that mediates the reduction of polyprenal into dolichal in a NADP-dependent mechanism. Dolichols are required for the synthesis of dolichol-linked monosaccharides and the oligosaccharide precursor used for N-glycosylation. This chain is Polyprenal reductase 2, found in Oryza sativa subsp. japonica (Rice).